Here is a 354-residue protein sequence, read N- to C-terminus: DNA polymerase IV (354 aa).

The 182-residue stretch at 7–188 (IIHVDMDCFF…LPLAKIPGVG (182 aa)) folds into the UmuC domain. The Mg(2+) site is built by Asp11 and Asp106. The active site involves Glu107.

Belongs to the DNA polymerase type-Y family. Monomer. The cofactor is Mg(2+).

The protein localises to the cytoplasm. The catalysed reaction is DNA(n) + a 2'-deoxyribonucleoside 5'-triphosphate = DNA(n+1) + diphosphate. In terms of biological role, poorly processive, error-prone DNA polymerase involved in untargeted mutagenesis. Copies undamaged DNA at stalled replication forks, which arise in vivo from mismatched or misaligned primer ends. These misaligned primers can be extended by PolIV. Exhibits no 3'-5' exonuclease (proofreading) activity. May be involved in translesional synthesis, in conjunction with the beta clamp from PolIII. This chain is DNA polymerase IV, found in Shigella boydii serotype 18 (strain CDC 3083-94 / BS512).